A 320-amino-acid chain; its full sequence is Pyrroline-5-carboxylate reductase (320 aa).

The protein belongs to the pyrroline-5-carboxylate reductase family.

It catalyses the reaction L-proline + NADP(+) = (S)-1-pyrroline-5-carboxylate + NADPH + 2 H(+). The enzyme catalyses L-proline + NAD(+) = (S)-1-pyrroline-5-carboxylate + NADH + 2 H(+). It functions in the pathway amino-acid biosynthesis; L-proline biosynthesis; L-proline from L-glutamate 5-semialdehyde: step 1/1. The polypeptide is Pyrroline-5-carboxylate reductase (P5CR) (Lophium arboricola (Zalerion arboricola)).